A 918-amino-acid chain; its full sequence is MNAQLDGLSVSSSSTGSLGSAAAAAGGGGGAGLRLLSANVRQLHQALTALLSEPEREQFTHCLNAYHARRNVFDLVRTLRVLLDSPVKRRLLPMLRLVIPRSDQLLFDQYTAEGLYLPATTPYRQPAWAAPDGAGPGEVRLVSLRRAKAHEGLGFSIRGGSEHGVGIYVSLVEPGSLAEKEGLRVGDQILRVNDKSLARVTHAEAVKALKGSKKLVLSVYSAGRIPGGYVTNHIYTWVDPQGRSTSPPSSLPQPHGSTLRQREDDRRSTLHLLQSGDEKKVNLVLGDGRSLGLTIRGGAEYGLGIYITGVDPGSEAESSGLKVGDQILEVNGRSFLNILHDEAVKLLKSSRHLILTVKDVGRLPHARTTVDQTKWIASSRIGESVANSAGFPGDHTEEGTSKPGFYKGPAGSQVTLSSLGNQTRALLDDQARHLLTEQERATMMYYLAQYRGGTISVEAMVMALFELLNTHAKFSLLSEVRSIISPQDLDRFDHLVLRREIESMKARQPPGPGVGDTYSMVSYSDTGSSTGSHGTSTTVSSARERLLWLIDLMENTLDLEGTGETTQGSTNALPDVSVDDVKSPSEDLPGIKPPPPPPPLAQGHDRLLGQPRKPGREDPAPLSSAAHSGIVFSAPRNRSPPPGTAPTPGPSSAQDSPSSPIYASISHANPSSRKPLDTHLALVNQHPIGPFPRVQSPPHLKSPPAETPGAGACLPPPSPSEHPDAVGANQHFVLVEVHRPDSEPDVNEVRALPQTRTASTLSQLSDSGQTLSEDSGVDAGETEASTSGRGRQTASAKNKNGKEQPRTERTAEGANKPPGLLEPTSTLVRVRKSAATLGIAIEGGANTRQPLPRIVTIQRGGSAHNCGQLKVGHVILEVNGQTLRGKEHKEAARIIAEAFKTKERDYIDFLVTEFNVML.

Positions 141-224 constitute a PDZ 1 domain; that stretch reads LVSLRRAKAH…LVLSVYSAGR (84 aa). Residues 240–266 form a disordered region; sequence PQGRSTSPPSSLPQPHGSTLRQREDDR. Residues 280–362 form the PDZ 2 domain; it reads KVNLVLGDGR…LILTVKDVGR (83 aa). Disordered regions lie at residues 387–407, 503–538, and 560–824; these read NSAGFPGDHTEEGTSKPGFYK, SMKARQPPGPGVGDTYSMVSYSDTGSSTGSHGTSTT, and EGTG…LEPT. Residues 522–538 are compositionally biased toward low complexity; sequence SYSDTGSSTGSHGTSTT. The segment covering 563–572 has biased composition (polar residues); sequence GETTQGSTNA. Composition is skewed to pro residues over residues 591-600 and 638-649; these read IKPPPPPPPL and RSPPPGTAPTPG. Over residues 654 to 672 the composition is skewed to polar residues; the sequence is QDSPSSPIYASISHANPSS. S696 is subject to Phosphoserine. Composition is skewed to polar residues over residues 754–773 and 783–798; these read QTRTASTLSQLSDSGQTLSE and EASTSGRGRQTASAKN. Over residues 800-811 the composition is skewed to basic and acidic residues; the sequence is NGKEQPRTERTA. Residues 827-910 form the PDZ 3 domain; that stretch reads LVRVRKSAAT…TKERDYIDFL (84 aa).

In terms of assembly, forms homooligomers. Interacts (via C-terminal PDZ domain) with MYO15A; this interaction is necessary for localization of WHRN to stereocilia tips. Interacts (via C-terminal PDZ domain) with MPP1/p55. Interacts with LRRC4C/NGL1. Interacts with MYO7A. Interacts with RPGR. Interacts with EPS8. Interacts with CASK. Interacts with CIB2. Component of USH2 complex, composed of ADGRV1, PDZD7, USH2A and WHRN. Interacts (via PDZ domains) with PDZD7; the interaction is direct. Interacts (via N-terminal PDZ domain) with USH2A (via cytoplasmic region). Interacts with ADGRV1/MASS1 (via cytoplasmic region). As to expression, expressed in the retina. Colocalizes with RPGR in the photoreceptor connecting cilium, a thin bridge linking the cell body and the light-sensing outer segment (at protein level). Detected in the inner ear throughout development from embryonic day 12 to 20 days after birth. Displays a dynamic pattern of expression after birth, demonstrating an ordered appearance and fade-out across stereocilia rows. Isoforms 5, 6, 7 and 8 are not detected in the retina.

The protein localises to the cytoplasm. It localises to the cell projection. The protein resides in the stereocilium. Its subcellular location is the growth cone. It is found in the photoreceptor inner segment. The protein localises to the synapse. In terms of biological role, involved in hearing and vision as member of the USH2 complex. Necessary for elongation and maintenance of inner and outer hair cell stereocilia in the organ of Corti in the inner ear. Involved in the maintenance of the hair bundle ankle region, which connects stereocilia in cochlear hair cells of the inner ear. In retina photoreceptors, required for the maintenance of periciliary membrane complex that seems to play a role in regulating intracellular protein transport. The chain is Whirlin from Mus musculus (Mouse).